The following is a 497-amino-acid chain: Guanosine-5'-triphosphate,3'-diphosphate pyrophosphatase (497 aa).

The protein belongs to the GppA/Ppx family. GppA subfamily.

It carries out the reaction guanosine 3'-diphosphate 5'-triphosphate + H2O = guanosine 3',5'-bis(diphosphate) + phosphate + H(+). The protein operates within purine metabolism; ppGpp biosynthesis; ppGpp from GTP: step 2/2. Catalyzes the conversion of pppGpp to ppGpp. Guanosine pentaphosphate (pppGpp) is a cytoplasmic signaling molecule which together with ppGpp controls the 'stringent response', an adaptive process that allows bacteria to respond to amino acid starvation, resulting in the coordinated regulation of numerous cellular activities. This Vibrio atlanticus (strain LGP32) (Vibrio splendidus (strain Mel32)) protein is Guanosine-5'-triphosphate,3'-diphosphate pyrophosphatase.